The sequence spans 564 residues: CTP synthase (564 aa).

Residues 1-265 form an amidoligase domain region; it reads MTKFVFVTGG…DEIVCHRLGI (265 aa). Residue S13 coordinates CTP. S13 serves as a coordination point for UTP. ATP is bound by residues 14 to 19 and D71; that span reads SLGKGI. Residues D71 and E139 each contribute to the Mg(2+) site. CTP contacts are provided by residues 146–148, 186–191, and K222; these read DIE and KTKPTQ. UTP-binding positions include 186 to 191 and K222; that span reads KTKPTQ. The 254-residue stretch at 290–543 folds into the Glutamine amidotransferase type-1 domain; it reads SIALVGKYVD…VRAAISFADK (254 aa). G351 provides a ligand contact to L-glutamine. C378 serves as the catalytic Nucleophile; for glutamine hydrolysis. L-glutamine is bound by residues 379–382, E402, and R469; that span reads LGMQ. Residues H516 and E518 contribute to the active site.

Belongs to the CTP synthase family. As to quaternary structure, homotetramer.

It carries out the reaction UTP + L-glutamine + ATP + H2O = CTP + L-glutamate + ADP + phosphate + 2 H(+). It catalyses the reaction L-glutamine + H2O = L-glutamate + NH4(+). The catalysed reaction is UTP + NH4(+) + ATP = CTP + ADP + phosphate + 2 H(+). It functions in the pathway pyrimidine metabolism; CTP biosynthesis via de novo pathway; CTP from UDP: step 2/2. With respect to regulation, allosterically activated by GTP, when glutamine is the substrate; GTP has no effect on the reaction when ammonia is the substrate. The allosteric effector GTP functions by stabilizing the protein conformation that binds the tetrahedral intermediate(s) formed during glutamine hydrolysis. Inhibited by the product CTP, via allosteric rather than competitive inhibition. Functionally, catalyzes the ATP-dependent amination of UTP to CTP with either L-glutamine or ammonia as the source of nitrogen. Regulates intracellular CTP levels through interactions with the four ribonucleotide triphosphates. The chain is CTP synthase from Nitrosomonas eutropha (strain DSM 101675 / C91 / Nm57).